A 347-amino-acid polypeptide reads, in one-letter code: GMP reductase (347 aa).

108 to 131 (ADFVKMQQILALSPGLKFICIDVA) contacts NADP(+). Residues Gly-181 and Gly-183 each coordinate K(+). The active-site Thioimidate intermediate is Cys-186. 216 to 239 (IVSDGGCSVPGDVAKAFGGGADFV) serves as a coordination point for NADP(+).

The protein belongs to the IMPDH/GMPR family. GuaC type 1 subfamily. Homotetramer.

The catalysed reaction is IMP + NH4(+) + NADP(+) = GMP + NADPH + 2 H(+). Catalyzes the irreversible NADPH-dependent deamination of GMP to IMP. It functions in the conversion of nucleobase, nucleoside and nucleotide derivatives of G to A nucleotides, and in maintaining the intracellular balance of A and G nucleotides. This Serratia proteamaculans (strain 568) protein is GMP reductase.